The following is a 359-amino-acid chain: UDP-N-acetylglucosamine--N-acetylmuramyl-(pentapeptide) pyrophosphoryl-undecaprenol N-acetylglucosamine transferase (359 aa).

UDP-N-acetyl-alpha-D-glucosamine contacts are provided by residues 15–17 (TGG), asparagine 127, arginine 166, serine 191, isoleucine 245, 264–269 (ALTVSE), and glutamine 290.

Belongs to the glycosyltransferase 28 family. MurG subfamily.

Its subcellular location is the cell inner membrane. The enzyme catalyses di-trans,octa-cis-undecaprenyl diphospho-N-acetyl-alpha-D-muramoyl-L-alanyl-D-glutamyl-meso-2,6-diaminopimeloyl-D-alanyl-D-alanine + UDP-N-acetyl-alpha-D-glucosamine = di-trans,octa-cis-undecaprenyl diphospho-[N-acetyl-alpha-D-glucosaminyl-(1-&gt;4)]-N-acetyl-alpha-D-muramoyl-L-alanyl-D-glutamyl-meso-2,6-diaminopimeloyl-D-alanyl-D-alanine + UDP + H(+). It participates in cell wall biogenesis; peptidoglycan biosynthesis. Its function is as follows. Cell wall formation. Catalyzes the transfer of a GlcNAc subunit on undecaprenyl-pyrophosphoryl-MurNAc-pentapeptide (lipid intermediate I) to form undecaprenyl-pyrophosphoryl-MurNAc-(pentapeptide)GlcNAc (lipid intermediate II). The chain is UDP-N-acetylglucosamine--N-acetylmuramyl-(pentapeptide) pyrophosphoryl-undecaprenol N-acetylglucosamine transferase from Pseudomonas entomophila (strain L48).